We begin with the raw amino-acid sequence, 352 residues long: Peptide chain release factor 1 (352 aa).

Gln233 is subject to N5-methylglutamine. Residues 288-309 form a disordered region; sequence NAKDRKEQVGSGDRSERIRTYN. The span at 289-306 shows a compositional bias: basic and acidic residues; it reads AKDRKEQVGSGDRSERIR.

It belongs to the prokaryotic/mitochondrial release factor family. In terms of processing, methylated by PrmC. Methylation increases the termination efficiency of RF1.

The protein localises to the cytoplasm. Peptide chain release factor 1 directs the termination of translation in response to the peptide chain termination codons UAG and UAA. This is Peptide chain release factor 1 from Helicobacter pylori (strain G27).